The sequence spans 602 residues: (R)-limonene synthase (602 aa).

Mg(2+) contacts are provided by D356, D360, D500, T504, and E508. The DDXXD motif motif lies at 356 to 360; the sequence is DDVYD.

This sequence belongs to the terpene synthase family. The cofactor is Mg(2+). Requires Mn(2+) as cofactor.

It catalyses the reaction (2E)-geranyl diphosphate = (4R)-limonene + diphosphate. Its function is as follows. Catalyzes the formation of (R)-(+)-limonene, terpinolene, (1R,5S)-(+)-camphene, (1R,5R)-(+)-alpha-pinene, beta-myrcene and traces of alpha-phellandrene. In Lavandula angustifolia (Lavender), this protein is (R)-limonene synthase.